The following is a 434-amino-acid chain: GTPase Obg (434 aa).

Positions 1–158 (MFLDTAKIKV…RELQLELKIL (158 aa)) constitute an Obg domain. Positions 159–336 (ADVGLVGFPS…LLDATAELLD (178 aa)) constitute an OBG-type G domain. GTP contacts are provided by residues 165-172 (GFPSVGKS), 190-194 (FTTIV), 212-215 (DLPG), 282-285 (NKMD), and 317-319 (SGL). Residues Ser-172 and Thr-192 each contribute to the Mg(2+) site. The region spanning 356 to 434 (GFDEEEKAFE…IGKFEFEFVD (79 aa)) is the OCT domain.

This sequence belongs to the TRAFAC class OBG-HflX-like GTPase superfamily. OBG GTPase family. Monomer. The cofactor is Mg(2+).

It localises to the cytoplasm. An essential GTPase which binds GTP, GDP and possibly (p)ppGpp with moderate affinity, with high nucleotide exchange rates and a fairly low GTP hydrolysis rate. Plays a role in control of the cell cycle, stress response, ribosome biogenesis and in those bacteria that undergo differentiation, in morphogenesis control. This is GTPase Obg from Streptococcus pneumoniae serotype 19F (strain G54).